The chain runs to 149 residues: Large ribosomal subunit protein uL13 (149 aa).

This sequence belongs to the universal ribosomal protein uL13 family. In terms of assembly, part of the 50S ribosomal subunit.

Functionally, this protein is one of the early assembly proteins of the 50S ribosomal subunit, although it is not seen to bind rRNA by itself. It is important during the early stages of 50S assembly. In Thermobifida fusca (strain YX), this protein is Large ribosomal subunit protein uL13.